A 529-amino-acid polypeptide reads, in one-letter code: Beta-glucosidase 11 (529 aa).

Positions 1 to 25 (MAVAGAMVMSGALLLLHLLAFTCVA) are cleaved as a signal peptide. A beta-D-glucoside-binding positions include Q54, H157, and 202-203 (NE). E203 serves as the catalytic Proton donor. The cysteines at positions 222 and 230 are disulfide-linked. Position 346 (Y346) interacts with a beta-D-glucoside. The N-linked (GlcNAc...) asparagine glycan is linked to N361. E417 is an a beta-D-glucoside binding site. E417 serves as the catalytic Nucleophile. An N-linked (GlcNAc...) asparagine glycan is attached at N425. Residues W466, 473–474 (EW), and F482 contribute to the a beta-D-glucoside site.

Belongs to the glycosyl hydrolase 1 family.

It catalyses the reaction Hydrolysis of terminal, non-reducing beta-D-glucosyl residues with release of beta-D-glucose.. This is Beta-glucosidase 11 (BGLU11) from Oryza sativa subsp. japonica (Rice).